Reading from the N-terminus, the 20-residue chain is Unknown protein NF007 from 2D-PAGE (20 aa).

The protein is Unknown protein NF007 from 2D-PAGE of Naegleria fowleri (Brain eating amoeba).